The sequence spans 271 residues: Formamidopyrimidine-DNA glycosylase (271 aa).

The Schiff-base intermediate with DNA role is filled by Pro2. Glu3 serves as the catalytic Proton donor. Lys58 serves as the catalytic Proton donor; for beta-elimination activity. DNA-binding residues include His91, Arg110, and Arg152. Residues 237–271 form an FPG-type zinc finger; that stretch reads QIYGRSAHPCPICGTPIRLERIGQRASYYCTQCQH. The active-site Proton donor; for delta-elimination activity is the Arg261.

The protein belongs to the FPG family. In terms of assembly, monomer. Zn(2+) is required as a cofactor.

It carries out the reaction Hydrolysis of DNA containing ring-opened 7-methylguanine residues, releasing 2,6-diamino-4-hydroxy-5-(N-methyl)formamidopyrimidine.. The enzyme catalyses 2'-deoxyribonucleotide-(2'-deoxyribose 5'-phosphate)-2'-deoxyribonucleotide-DNA = a 3'-end 2'-deoxyribonucleotide-(2,3-dehydro-2,3-deoxyribose 5'-phosphate)-DNA + a 5'-end 5'-phospho-2'-deoxyribonucleoside-DNA + H(+). Its function is as follows. Involved in base excision repair of DNA damaged by oxidation or by mutagenic agents. Acts as a DNA glycosylase that recognizes and removes damaged bases. Has a preference for oxidized purines, such as 7,8-dihydro-8-oxoguanine (8-oxoG). Has AP (apurinic/apyrimidinic) lyase activity and introduces nicks in the DNA strand. Cleaves the DNA backbone by beta-delta elimination to generate a single-strand break at the site of the removed base with both 3'- and 5'-phosphates. This is Formamidopyrimidine-DNA glycosylase from Nitrosococcus oceani (strain ATCC 19707 / BCRC 17464 / JCM 30415 / NCIMB 11848 / C-107).